The sequence spans 20 residues: Short cationic peptide-6a (20 aa).

The residue at position 20 (S20) is a Serine amide.

Expressed by the venom gland.

The protein localises to the secreted. In Cupiennius salei (American wandering spider), this protein is Short cationic peptide-6a.